The sequence spans 435 residues: 5'-deoxyadenosine deaminase (435 aa).

Positions 64 and 66 each coordinate Zn(2+). Residues glutamate 93 and histidine 185 each coordinate substrate. Histidine 212 is a binding site for Zn(2+). Residues glutamate 215 and aspartate 300 each contribute to the substrate site. Residue aspartate 300 coordinates Zn(2+).

This sequence belongs to the metallo-dependent hydrolases superfamily. MTA/SAH deaminase family. In terms of assembly, homotetramer. Zn(2+) serves as cofactor.

It carries out the reaction 5'-deoxyadenosine + H2O + H(+) = 5'-deoxyinosine + NH4(+). The catalysed reaction is S-adenosyl-L-homocysteine + H2O + H(+) = S-inosyl-L-homocysteine + NH4(+). The enzyme catalyses S-methyl-5'-thioadenosine + H2O + H(+) = S-methyl-5'-thioinosine + NH4(+). It catalyses the reaction adenosine + H2O + H(+) = inosine + NH4(+). Its pathway is amino-acid biosynthesis; S-adenosyl-L-methionine biosynthesis. Its function is as follows. Catalyzes the deamination of three SAM-derived enzymatic products, namely 5'-deoxyadenosine, S-adenosyl-L-homocysteine, and 5'-methylthioadenosine, to produce the inosine analogs. Can also deaminate adenosine. The preferred substrate for this enzyme is 5'-deoxyadenosine, but all these substrates are efficiently deaminated. Likely functions in a S-adenosyl-L-methionine (SAM) recycling pathway from S-adenosyl-L-homocysteine (SAH) produced from SAM-dependent methylation reactions. May also be involved in the recycling of 5'-deoxyadenosine, whereupon the 5'-deoxyribose moiety of 5'-deoxyinosine is further metabolized to deoxyhexoses used for the biosynthesis of aromatic amino acids in methanogens. The polypeptide is 5'-deoxyadenosine deaminase (Methanobrevibacter smithii (strain ATCC 35061 / DSM 861 / OCM 144 / PS)).